A 76-amino-acid chain; its full sequence is Sulfur carrier protein TusA (76 aa).

Cys14 serves as the catalytic Cysteine persulfide intermediate.

The protein belongs to the sulfur carrier protein TusA family. In terms of assembly, interacts with IscS.

The protein localises to the cytoplasm. It participates in tRNA modification. Its function is as follows. Sulfur carrier protein involved in sulfur trafficking in the cell. Part of a sulfur-relay system required for 2-thiolation during synthesis of 2-thiouridine of the modified wobble base 5-methylaminomethyl-2-thiouridine (mnm(5)s(2)U) in tRNA. Interacts with IscS and stimulates its cysteine desulfurase activity. Accepts an activated sulfur from IscS, which is then transferred to TusD, and thus determines the direction of sulfur flow from IscS to 2-thiouridine formation. Also appears to be involved in sulfur transfer for the biosynthesis of molybdopterin. The sequence is that of Sulfur carrier protein TusA from Buchnera aphidicola subsp. Acyrthosiphon pisum (strain 5A).